A 4036-amino-acid chain; its full sequence is Hybrid PKS-NRPS synthetase iliA (4036 aa).

The 433-residue stretch at 7–439 folds into the Ketosynthase family 3 (KS3) domain; sequence PEPIAVIGSA…GTNAHAIIES (433 aa). Active-site for beta-ketoacyl synthase activity residues include Cys181, His318, and His359. The malonyl-CoA:ACP transacylase (MAT) domain stretch occupies residues 561 to 886; that stretch reads IFTGQGAQWP…LKRNGSDVEA (326 aa). The interval 955-1092 is N-terminal hotdog fold; it reads HELLGRRTPD…GDLVVHLGAD (138 aa). The segment at 955 to 1262 is dehydratase (DH) domain; the sequence is HELLGRRTPD…ATNMVGEQDA (308 aa). The PKS/mFAS DH domain occupies 955-1263; sequence HELLGRRTPD…TNMVGEQDAS (309 aa). Residue His987 is the Proton acceptor; for dehydratase activity of the active site. Residues 1109-1263 form a C-terminal hotdog fold region; it reads LVNIDGERVY…TNMVGEQDAS (155 aa). Asp1168 serves as the catalytic Proton donor; for dehydratase activity. The segment at 1402 to 1601 is methyltransferase (MT) domain; the sequence is EDDMLDRFYM…FSGADTVMHD (200 aa). The ketoreductase (KR) domain stretch occupies residues 2136–2277; it reads KTYFMVGMAG…SVATVIGNIG (142 aa). In terms of domain architecture, Carrier 1 spans 2425 to 2502; sequence EAVAAVVKAF…QVCTWATKKV (78 aa). Position 2462 is an O-(pantetheine 4'-phosphoryl)serine (Ser2462). Disordered regions lie at residues 2520-2583 and 2597-2621; these read AEKT…KLGT and DADA…NRPE. Over residues 2530–2540 the composition is skewed to pro residues; sequence APAPDAAPAPA. A condensation (C) domain region spans residues 2627–3054; it reads IMSQAQSRIW…HLDITECEIY (428 aa). The tract at residues 3088–3485 is adenylation (A) (KR) domain; that stretch reads SLHSDKSAVK…GTLLCLGRLD (398 aa). The segment at 3088 to 3485 is reductase (RED) domain; sequence SLHSDKSAVK…GTLLCLGRLD (398 aa). Positions 3596-3675 constitute a Carrier 2 domain; that stretch reads EKMTIREGEV…EMARRIDEHQ (80 aa). Ser3635 carries the post-translational modification O-(pantetheine 4'-phosphoryl)serine.

The protein in the C-terminal section; belongs to the NRP synthetase family.

It catalyses the reaction L-tyrosine + holo-[ACP] + 7 malonyl-CoA + acetyl-CoA + 8 AH2 + 2 S-adenosyl-L-methionine + ATP + 4 H(+) = N-[(4E,6E,10S,12Z,14E)-6,10-dimethyl-3-oxohexadeca-4,6,12,14-tetraenoyl]-L-tyrosyl-[ACP] + 8 A + AMP + 2 S-adenosyl-L-homocysteine + 7 CO2 + diphosphate + 8 CoA + 6 H2O. Its pathway is mycotoxin biosynthesis. Its function is as follows. Hybrid PKS-NRPS synthetase; part of the gene cluster that mediates the biosynthesis of ilicicolin H, a 4-hydroxy-2-pyridonealkaloid that has potent and broad antifungal activities by inhibiting the mitochondrial respiration chain. IliA assembles the backbone of ilicicolin H. The PKS portion and trans-acting enoyl reductase iliB work together to construct an octaketide, and two methyl groups are introduced by the MT domain during the chain assembly. The nascent chain is then condensed with tyrosine, catalyzed by the C domain, and the resulting PKS-NRPS hybrid is offloaded by the RED domain to form an advanced tetramic acid intermediate. The biosynthesis of ilicicolin H starts with formation of the tetramic acid by the hybrid PKS-NRPS synthetase iliA with the partnering trans-enoyl reductase iliB since iliA lacks a designated enoylreductase (ER) domain. The cytochrome P450 monooxygenase iliC then catalyzes the ring expansion of the tetramate to the acyclic 2-pyridone. The pericyclase iliD further converts the acyclic 2-pyridone into 8-epi-ilicicolin H. 8-epi-ilicicolin H might then spontaneously convert to ilicicolin H, since ilicicolin H is produced in the absence of the epimerase iliE, in contrast to what was observed for the Talaromyces variabilis ilicolin H biosynthetic pathway. This is Hybrid PKS-NRPS synthetase iliA from Neonectria sp. (strain DH2).